A 403-amino-acid chain; its full sequence is RUN domain-containing protein 3B (403 aa).

Positions 1–20 are disordered; sequence MASRSLGGLSGSRGGGKKSL. The residue at position 13 (arginine 13) is an Omega-N-methylarginine. One can recognise an RUN domain in the interval 53 to 185; that stretch reads DDSSPEFNNF…IDFSFCLKGE (133 aa). The disordered stretch occupies residues 207–232; that stretch reads SDSISSDEEELRTFGSSDSEGSTPEN. Phosphoserine is present on residues serine 211 and serine 212. The segment covering 220-231 has biased composition (polar residues); sequence FGSSDSEGSTPE. The stretch at 296 to 321 forms a coiled coil; the sequence is AHKLEKEQLEYIIVELQDQLKSYQSL.

Belongs to the RUNDC3 family. In terms of assembly, interacts with RAP2A.

This chain is RUN domain-containing protein 3B (Rundc3b), found in Rattus norvegicus (Rat).